Here is a 374-residue protein sequence, read N- to C-terminus: Ribosomal RNA large subunit methyltransferase G (374 aa).

The protein belongs to the methyltransferase superfamily. RlmG family.

The protein localises to the cytoplasm. The catalysed reaction is guanosine(1835) in 23S rRNA + S-adenosyl-L-methionine = N(2)-methylguanosine(1835) in 23S rRNA + S-adenosyl-L-homocysteine + H(+). Its function is as follows. Specifically methylates the guanine in position 1835 (m2G1835) of 23S rRNA. The sequence is that of Ribosomal RNA large subunit methyltransferase G from Pseudomonas putida (strain GB-1).